Reading from the N-terminus, the 184-residue chain is Shikimate kinase (184 aa).

20–25 (GVGKSR) contributes to the ATP binding site. Mg(2+) is bound at residue Ser-24. Substrate is bound by residues Asp-42, Arg-66, and Gly-88. An ATP-binding site is contributed by Arg-127. A substrate-binding site is contributed by Arg-146. ATP is bound at residue Arg-162.

It belongs to the shikimate kinase family. As to quaternary structure, monomer. Requires Mg(2+) as cofactor.

The protein localises to the cytoplasm. The catalysed reaction is shikimate + ATP = 3-phosphoshikimate + ADP + H(+). It participates in metabolic intermediate biosynthesis; chorismate biosynthesis; chorismate from D-erythrose 4-phosphate and phosphoenolpyruvate: step 5/7. Its function is as follows. Catalyzes the specific phosphorylation of the 3-hydroxyl group of shikimic acid using ATP as a cosubstrate. The chain is Shikimate kinase from Thermus thermophilus (strain ATCC BAA-163 / DSM 7039 / HB27).